A 681-amino-acid chain; its full sequence is Threonine--tRNA ligase (681 aa).

Residues 3 to 97 (KQIQVTLPDG…EEDVQLALLT (95 aa)) enclose the TGS domain. Residues 279-576 (DHRVLGKQLD…LIEHYAGAFP (298 aa)) are catalytic. 3 residues coordinate Zn(2+): C372, H423, and H553.

This sequence belongs to the class-II aminoacyl-tRNA synthetase family. In terms of assembly, homodimer. Zn(2+) serves as cofactor.

It is found in the cytoplasm. The catalysed reaction is tRNA(Thr) + L-threonine + ATP = L-threonyl-tRNA(Thr) + AMP + diphosphate + H(+). In terms of biological role, catalyzes the attachment of threonine to tRNA(Thr) in a two-step reaction: L-threonine is first activated by ATP to form Thr-AMP and then transferred to the acceptor end of tRNA(Thr). Also edits incorrectly charged L-seryl-tRNA(Thr). In Acidobacterium capsulatum (strain ATCC 51196 / DSM 11244 / BCRC 80197 / JCM 7670 / NBRC 15755 / NCIMB 13165 / 161), this protein is Threonine--tRNA ligase.